We begin with the raw amino-acid sequence, 119 residues long: Large ribosomal subunit protein bL20 (119 aa).

It belongs to the bacterial ribosomal protein bL20 family.

Functionally, binds directly to 23S ribosomal RNA and is necessary for the in vitro assembly process of the 50S ribosomal subunit. It is not involved in the protein synthesizing functions of that subunit. The chain is Large ribosomal subunit protein bL20 from Dehalococcoides mccartyi (strain ATCC BAA-2266 / KCTC 15142 / 195) (Dehalococcoides ethenogenes (strain 195)).